We begin with the raw amino-acid sequence, 92 residues long: Putative pterin-4-alpha-carbinolamine dehydratase 2 (92 aa).

This sequence belongs to the pterin-4-alpha-carbinolamine dehydratase family.

The catalysed reaction is (4aS,6R)-4a-hydroxy-L-erythro-5,6,7,8-tetrahydrobiopterin = (6R)-L-erythro-6,7-dihydrobiopterin + H2O. The chain is Putative pterin-4-alpha-carbinolamine dehydratase 2 from Gloeobacter violaceus (strain ATCC 29082 / PCC 7421).